We begin with the raw amino-acid sequence, 676 residues long: Envelope fusion protein (676 aa).

The signal sequence occupies residues 1 to 16; sequence MSPLALIVLLAWHATA. Asn-76 and Asn-87 each carry an N-linked (GlcNAc...) asparagine; by host glycan. Residues 169–215 adopt a coiled-coil conformation; it reads ARELHDLAKTSNALNEQIKEVTDELVNIAKFEEHKQCLERQRDDLCG. 4 N-linked (GlcNAc...) asparagine; by host glycosylation sites follow: Asn-266, Asn-469, Asn-505, and Asn-548. The chain crosses the membrane as a helical span at residues 577–597; sequence CATAEAVVACVVLFLVALLLF. Residue Asn-628 is glycosylated (N-linked (GlcNAc...) asparagine; by host).

N-glycosylated.

It localises to the virion membrane. It is found in the host cell membrane. Envelope glycoprotein which mediates the fusion of viral and host endosomal membranes leading to virus entry into the host cell. This chain is Envelope fusion protein, found in Lepidoptera (butterflies and moths).